Here is a 101-residue protein sequence, read N- to C-terminus: Small ribosomal subunit protein uS14A (101 aa).

Residues Arg32–Arg71 form a disordered region. 2 stretches are compositionally biased toward basic and acidic residues: residues Glu38–Arg53 and Arg61–Pro70.

Belongs to the universal ribosomal protein uS14 family. In terms of assembly, part of the 30S ribosomal subunit. Contacts proteins S3 and S10.

In terms of biological role, binds 16S rRNA, required for the assembly of 30S particles and may also be responsible for determining the conformation of the 16S rRNA at the A site. This Streptomyces griseus subsp. griseus (strain JCM 4626 / CBS 651.72 / NBRC 13350 / KCC S-0626 / ISP 5235) protein is Small ribosomal subunit protein uS14A.